A 220-amino-acid chain; its full sequence is Small ribosomal subunit protein uS3 (220 aa).

The region spanning 38 to 106 is the KH type-2 domain; that stretch reads IRNFINKKLQ…QVHINIVEIK (69 aa).

Belongs to the universal ribosomal protein uS3 family. In terms of assembly, part of the 30S ribosomal subunit. Forms a tight complex with proteins S10 and S14.

Binds the lower part of the 30S subunit head. Binds mRNA in the 70S ribosome, positioning it for translation. The protein is Small ribosomal subunit protein uS3 of Lacticaseibacillus paracasei (strain ATCC 334 / BCRC 17002 / CCUG 31169 / CIP 107868 / KCTC 3260 / NRRL B-441) (Lactobacillus paracasei).